Consider the following 425-residue polypeptide: Histidine--tRNA ligase (425 aa).

This sequence belongs to the class-II aminoacyl-tRNA synthetase family. Homodimer.

It localises to the cytoplasm. It carries out the reaction tRNA(His) + L-histidine + ATP = L-histidyl-tRNA(His) + AMP + diphosphate + H(+). The polypeptide is Histidine--tRNA ligase (Shewanella sp. (strain W3-18-1)).